The sequence spans 444 residues: Type VII secretion system protein EssB (444 aa).

Residues 1–229 (MVKNHDPKNE…RKVGHTVFKW (229 aa)) lie on the Cytoplasmic side of the membrane. A helical transmembrane segment spans residues 230 to 250 (VAIGMTTLSVLLIAFLAFLYF). Residues 251 to 444 (SVMKHNERIE…EKRQEAERKK (194 aa)) are Extracellular-facing. Residues 366 to 444 (KNNGDLSNDK…EKRQEAERKK (79 aa)) form a disordered region. A compositionally biased stretch (basic and acidic residues) spans 372–444 (SNDKRSEETK…EKRQEAERKK (73 aa)). Residues 387 to 443 (LQDILDKEKQVKDEKAKSEEEKAKAKDEKLKQQEENEKKQKEQAQKDKEKRQEAERK) are a coiled coil.

This sequence belongs to the EssB family.

The protein resides in the cell membrane. Its function is as follows. Component of the type VII secretion system (Ess). Required for the secretion of EsxA. This Staphylococcus aureus (strain MRSA252) protein is Type VII secretion system protein EssB.